The primary structure comprises 289 residues: Probable ABC transporter permease protein BRA0749/BS1330_II0742 (289 aa).

6 helical membrane-spanning segments follow: residues 9-29, 70-90, 99-119, 144-166, 213-233, and 260-280; these read FLILPSLLLAAVVIFWPVVHL, VWTVAVVGGALVLSIPVAIIL, VARVIIMLPWAVSLTMTAIVW, IQWLASAATAFPMQILVGILVTV, IAIVLNTIYVFNSFPIIWVMT, and EASAVSLIMLAILLVFTVIYI. The region spanning 65–279 is the ABC transmembrane type-1 domain; it reads LWRTAVWTVA…AILLVFTVIY (215 aa).

Belongs to the binding-protein-dependent transport system permease family. As to quaternary structure, the complex is composed of two ATP-binding proteins (BRA0745), two transmembrane proteins (BRA0749) and a solute-binding protein (BRA0748).

Its subcellular location is the cell inner membrane. In terms of biological role, probably part of an ABC transporter complex. Probably responsible for the translocation of the substrate across the membrane. This is Probable ABC transporter permease protein BRA0749/BS1330_II0742 from Brucella suis biovar 1 (strain 1330).